The following is a 144-amino-acid chain: FK506-binding protein 2 (144 aa).

An N-terminal signal peptide occupies residues 1–20; sequence MARIIVLIVAFMALIAGVFA. Positions 48 to 136 constitute a PPIase FKBP-type domain; it reads GDTVSVHYTG…IFTTELVSID (89 aa). Positions 141–144 match the Prevents secretion from ER motif; the sequence is RDEL.

It belongs to the FKBP-type PPIase family. FKBP2 subfamily.

The protein resides in the endoplasmic reticulum. It carries out the reaction [protein]-peptidylproline (omega=180) = [protein]-peptidylproline (omega=0). With respect to regulation, inhibited by both FK506 and rapamycin. In terms of biological role, PPIases accelerate the folding of proteins. It catalyzes the cis-trans isomerization of proline imidic peptide bonds in oligopeptides. The sequence is that of FK506-binding protein 2 (FPR2) from Yarrowia lipolytica (strain CLIB 122 / E 150) (Yeast).